The sequence spans 409 residues: 8-amino-7-oxononanoate synthase (409 aa).

Arg20 contacts substrate. 116 to 117 (GY) provides a ligand contact to pyridoxal 5'-phosphate. A substrate-binding site is contributed by His141. Residues Ser187, His215, and Thr243 each contribute to the pyridoxal 5'-phosphate site. N6-(pyridoxal phosphate)lysine is present on Lys246. Thr369 is a binding site for substrate.

The protein belongs to the class-II pyridoxal-phosphate-dependent aminotransferase family. BioF subfamily. Homodimer. It depends on pyridoxal 5'-phosphate as a cofactor.

The enzyme catalyses 6-carboxyhexanoyl-[ACP] + L-alanine + H(+) = (8S)-8-amino-7-oxononanoate + holo-[ACP] + CO2. The protein operates within cofactor biosynthesis; biotin biosynthesis. In terms of biological role, catalyzes the decarboxylative condensation of pimeloyl-[acyl-carrier protein] and L-alanine to produce 8-amino-7-oxononanoate (AON), [acyl-carrier protein], and carbon dioxide. The chain is 8-amino-7-oxononanoate synthase from Polaromonas naphthalenivorans (strain CJ2).